We begin with the raw amino-acid sequence, 363 residues long: Spermatogenesis-associated protein 22 (363 aa).

Polar residues-rich tracts occupy residues M1 to S12, Q30 to D48, I98 to G108, and N140 to Q157. 3 disordered regions span residues M1 to D51, I98 to D127, and N140 to K170.

In terms of assembly, component of a multiprotein complex with MEIOB and RPA2. Interacts with MEIOB. Interacts with the complex BRME1:HSF2BP:BRCA2. In terms of tissue distribution, highly expressed in adult testis.

The protein localises to the chromosome. Functionally, meiosis-specific protein required for homologous recombination in meiosis I. The sequence is that of Spermatogenesis-associated protein 22 from Homo sapiens (Human).